A 498-amino-acid chain; its full sequence is Aspartyl/glutamyl-tRNA(Asn/Gln) amidotransferase subunit B (498 aa).

This sequence belongs to the GatB/GatE family. GatB subfamily. In terms of assembly, heterotrimer of A, B and C subunits.

It catalyses the reaction L-glutamyl-tRNA(Gln) + L-glutamine + ATP + H2O = L-glutaminyl-tRNA(Gln) + L-glutamate + ADP + phosphate + H(+). It carries out the reaction L-aspartyl-tRNA(Asn) + L-glutamine + ATP + H2O = L-asparaginyl-tRNA(Asn) + L-glutamate + ADP + phosphate + 2 H(+). Allows the formation of correctly charged Asn-tRNA(Asn) or Gln-tRNA(Gln) through the transamidation of misacylated Asp-tRNA(Asn) or Glu-tRNA(Gln) in organisms which lack either or both of asparaginyl-tRNA or glutaminyl-tRNA synthetases. The reaction takes place in the presence of glutamine and ATP through an activated phospho-Asp-tRNA(Asn) or phospho-Glu-tRNA(Gln). The sequence is that of Aspartyl/glutamyl-tRNA(Asn/Gln) amidotransferase subunit B from Erythrobacter litoralis (strain HTCC2594).